A 216-amino-acid polypeptide reads, in one-letter code: MISFIKGVLIEKDPTALLIDVNGIGYEVFVPMTTFYTLGDIDSQVSLYTHFVVREDAQQLYGFKSKVDKKVFQELIKVNGIGARTAIAILSGMDSKTLLHCIENKDYALLATVPGIGKKTAERLVIEIYDKLLKMANEIYAQTSGTTTTSQDSQAQQAPTSVVLANSIFNESVDALLALGYKQKDAEKMARSAMGDATTAAEVIRKALQGSIKSKR.

The tract at residues 1–64 is domain I; the sequence is MISFIKGVLI…EDAQQLYGFK (64 aa). A domain II region spans residues 65 to 143; sequence SKVDKKVFQE…KMANEIYAQT (79 aa). The interval 144-163 is flexible linker; it reads SGTTTTSQDSQAQQAPTSVV. Residues 164-216 form a domain III region; the sequence is LANSIFNESVDALLALGYKQKDAEKMARSAMGDATTAAEVIRKALQGSIKSKR.

This sequence belongs to the RuvA family. In terms of assembly, homotetramer. Forms an RuvA(8)-RuvB(12)-Holliday junction (HJ) complex. HJ DNA is sandwiched between 2 RuvA tetramers; dsDNA enters through RuvA and exits via RuvB. An RuvB hexamer assembles on each DNA strand where it exits the tetramer. Each RuvB hexamer is contacted by two RuvA subunits (via domain III) on 2 adjacent RuvB subunits; this complex drives branch migration. In the full resolvosome a probable DNA-RuvA(4)-RuvB(12)-RuvC(2) complex forms which resolves the HJ.

The protein localises to the cytoplasm. In terms of biological role, the RuvA-RuvB-RuvC complex processes Holliday junction (HJ) DNA during genetic recombination and DNA repair, while the RuvA-RuvB complex plays an important role in the rescue of blocked DNA replication forks via replication fork reversal (RFR). RuvA specifically binds to HJ cruciform DNA, conferring on it an open structure. The RuvB hexamer acts as an ATP-dependent pump, pulling dsDNA into and through the RuvAB complex. HJ branch migration allows RuvC to scan DNA until it finds its consensus sequence, where it cleaves and resolves the cruciform DNA. This chain is Holliday junction branch migration complex subunit RuvA, found in Francisella tularensis subsp. mediasiatica (strain FSC147).